Consider the following 179-residue polypeptide: MNRLKEKYIKEVTPSLVEKFNYSSVMQTPKVDKIVINMGVGDAVSNAKNLDKAVEELALITGQKPLITKAKKSIAGFRLREGMPIGAKVTLRGERMYEFLDKLVTVSLPRVRDFHGVSKKAFDGRGNYTLGIKEQLIFPEVDYDLVDKVRGMDIVIVTTANTDEESRELLAQLGMPFQK.

The protein belongs to the universal ribosomal protein uL5 family. In terms of assembly, part of the 50S ribosomal subunit; part of the 5S rRNA/L5/L18/L25 subcomplex. Contacts the 5S rRNA and the P site tRNA. Forms a bridge to the 30S subunit in the 70S ribosome.

Functionally, this is one of the proteins that bind and probably mediate the attachment of the 5S RNA into the large ribosomal subunit, where it forms part of the central protuberance. In the 70S ribosome it contacts protein S13 of the 30S subunit (bridge B1b), connecting the 2 subunits; this bridge is implicated in subunit movement. Contacts the P site tRNA; the 5S rRNA and some of its associated proteins might help stabilize positioning of ribosome-bound tRNAs. The polypeptide is Large ribosomal subunit protein uL5 (Enterococcus faecalis (strain ATCC 700802 / V583)).